The primary structure comprises 75 residues: Pi-hexatoxin-Hi1b (75 aa).

6 cysteine pairs are disulfide-bonded: cysteine 3-cysteine 18, cysteine 10-cysteine 23, cysteine 17-cysteine 33, cysteine 40-cysteine 55, cysteine 47-cysteine 60, and cysteine 54-cysteine 71. Domain repeat units follow at residues 3–33 and 40–71; these read CIRKWLSCVDRKNDCCEGLECYKRRHSFEVC and CLVKWKQCDGRERDCCPGLECWKRSGNKSSVC. The 2 X approximate repeats with cysteine pattern C-C-CC-C-C stretch occupies residues 3–71; sequence CIRKWLSCVD…KRSGNKSSVC (69 aa).

The protein belongs to the psalmotoxin-1 family. Double-knot toxin subfamily. In terms of tissue distribution, expressed by the venom gland.

It is found in the secreted. In terms of biological role, this toxin potently and selectively inhibits ASIC1a, an isoform of the gene ASIC1. It incompletely inhibits ASIC1a activation in a pH-independent and slowly reversible manner. This toxin acts by binding to and stabilizing the closed state of the channel, thereby impeding the transition into a conducting state. This toxin may bind to the acidic pocket of ASIC1a, since mutation of a key residue of this pocket (Arg-350) abolishes the ability of the toxin to inhibit ASIC1a. In vivo, this toxin protects the brain from neuronal injury when administered up to 8 hours after stroke onset. This chain is Pi-hexatoxin-Hi1b, found in Hadronyche infensa (Fraser island funnel-web spider).